The sequence spans 89 residues: Small ribosomal subunit protein uS15 (89 aa).

This sequence belongs to the universal ribosomal protein uS15 family. Part of the 30S ribosomal subunit. Forms a bridge to the 50S subunit in the 70S ribosome, contacting the 23S rRNA.

Its function is as follows. One of the primary rRNA binding proteins, it binds directly to 16S rRNA where it helps nucleate assembly of the platform of the 30S subunit by binding and bridging several RNA helices of the 16S rRNA. Forms an intersubunit bridge (bridge B4) with the 23S rRNA of the 50S subunit in the ribosome. The sequence is that of Small ribosomal subunit protein uS15 from Limosilactobacillus reuteri (strain DSM 20016) (Lactobacillus reuteri).